The sequence spans 398 residues: Glia-derived nexin (398 aa).

The N-terminal stretch at Met1–Cys19 is a signal peptide. N-linked (GlcNAc...) asparagine glycans are attached at residues Asn118 and Asn159.

This sequence belongs to the serpin family.

The protein resides in the secreted. The protein localises to the extracellular space. Serine protease inhibitor with activity toward thrombin, trypsin, and urokinase. Promotes neurite extension by inhibiting thrombin. Binds heparin. This chain is Glia-derived nexin (SERPINE2), found in Homo sapiens (Human).